We begin with the raw amino-acid sequence, 308 residues long: Ribosome maturation factor RimP (308 aa).

Disordered regions lie at residues 1–31 (MARA…AADA), 94–113 (EDIG…AAGG), and 249–308 (DLDE…EMNR). Residues 17 to 31 (APSRRTGGARAAADA) show a composition bias toward low complexity. Positions 99–113 (DGAGGTGGSGGAAGG) are enriched in gly residues. Acidic residues predominate over residues 249–269 (DLDEGLEDDDGLEDEDDEDEY).

The protein belongs to the RimP family.

It is found in the cytoplasm. Required for maturation of 30S ribosomal subunits. This is Ribosome maturation factor RimP from Parafrankia sp. (strain EAN1pec).